We begin with the raw amino-acid sequence, 268 residues long: Eukaryotic translation initiation factor 2 subunit beta (268 aa).

Residues Met-1–Gln-12 show a composition bias toward basic and acidic residues. Residues Met-1–Glu-85 form a disordered region. Ala-2 is subject to N-acetylalanine. Phosphoserine; by CK2 occurs at positions 42, 80, and 112. The C4-type zinc finger occupies Cys-222 to Cys-246.

The protein belongs to the eIF-2-beta/eIF-5 family. As to quaternary structure, eukaryotic translation initiation factor 2 eIF2 is a heterotrimeric complex composed of an alpha, a beta and a gamma subunit. Post-translationally, phosphorylated at Ser-42, Ser-80 and Ser-112 by CK2.

It is found in the cytoplasm. Its subcellular location is the cytosol. In terms of biological role, component of the eIF2 complex that functions in the early steps of protein synthesis by forming a ternary complex with GTP and initiator tRNA. This complex binds to a 40S ribosomal subunit, followed by mRNA binding to form a 43S pre-initiation complex (43S PIC). Junction of the 60S ribosomal subunit to form the 80S initiation complex is preceded by hydrolysis of the GTP bound to eIF2 and release of an eIF2-GDP binary complex. In order for eIF2 to recycle and catalyze another round of initiation, the GDP bound to eIF2 must exchange with GTP by way of a reaction catalyzed by eIF2B. In Arabidopsis thaliana (Mouse-ear cress), this protein is Eukaryotic translation initiation factor 2 subunit beta.